We begin with the raw amino-acid sequence, 336 residues long: Mitochondrial thiamine diphosphate carrier 2 (336 aa).

The next 6 helical transmembrane spans lie at 11 to 27 (RRAL…GGIS), 88 to 105 (VPAL…FTVL), 127 to 150 (YLSY…FDLL), 182 to 199 (LYSG…YAGL), 230 to 246 (SVSS…AGTF), and 303 to 322 (GLFP…FVAY). 3 Solcar repeats span residues 11 to 111 (RRAL…LKTF), 124 to 210 (LSPY…FKRS), and 231 to 328 (VSSF…ISDW).

This sequence belongs to the mitochondrial carrier (TC 2.A.29) family. Ubiquitous.

It localises to the mitochondrion inner membrane. In terms of biological role, mitochondrial transporter that mediates uptake of thiamine diphosphate (ThDP) into mitochondria. This Zea mays (Maize) protein is Mitochondrial thiamine diphosphate carrier 2.